Consider the following 275-residue polypeptide: Probable CCR4-associated factor 1 homolog 7 (275 aa).

4 residues coordinate a divalent metal cation: Asp40, Glu42, Asp167, and Asp236.

Belongs to the CAF1 family. In terms of assembly, component of the CCR4-NOT complex, at least composed of CRR4 and CAF1 proteins. Requires a divalent metal cation as cofactor.

It localises to the nucleus. It is found in the cytoplasm. The enzyme catalyses Exonucleolytic cleavage of poly(A) to 5'-AMP.. Ubiquitous transcription factor required for a diverse set of processes. It is a component of the CCR4 complex involved in the control of gene expression. This is Probable CCR4-associated factor 1 homolog 7 (CAF1-7) from Arabidopsis thaliana (Mouse-ear cress).